Reading from the N-terminus, the 89-residue chain is Small ribosomal subunit protein bS20 (89 aa).

Residues 1–12 are compositionally biased toward basic residues; that stretch reads MANIKSAKKRVK. The disordered stretch occupies residues 1–20; sequence MANIKSAKKRVKQTVVRNER.

This sequence belongs to the bacterial ribosomal protein bS20 family.

In terms of biological role, binds directly to 16S ribosomal RNA. The sequence is that of Small ribosomal subunit protein bS20 from Xylella fastidiosa (strain 9a5c).